A 472-amino-acid chain; its full sequence is Peptidoglycan endopeptidase RipA (472 aa).

The segment at residues 1–39 (MRRNRRGSPARPAARFVRPAIPSALSVALLVCTPGLATA) is a signal peptide (tat-type signal). The NlpC/P60 domain occupies 340 to 472 (RQASEYVIRR…TPYVVRYIEY (133 aa)). Cys-383 acts as the Nucleophile in catalysis. Residue His-432 is the Proton acceptor of the active site. Glu-444 is an active-site residue.

Belongs to the peptidase C40 family. In terms of assembly, monomer. Interacts with RpfB and PBP1A (ponA1) via residues 448-472 of RipA, interacts with RpfE. Interacts with the chaperone MoxR1. RipA-MoxR1 interaction in the cytoplasm leads to proper folding of RipA, resulting in its secretion. Also interacts with Mce2B. Exported by the Tat system. The position of the signal peptide cleavage has not been experimentally proven.

The protein localises to the secreted. Its activity is regulated as follows. MoxR1-mediated folding is critical for secretion via the TAT system. The synergistic effects on peptidoglycan degradation of RipA plus RpfB are inhibited by addition of PBP1A (ponA1). In terms of biological role, peptidoglycan endopeptidase that cleaves the bond between D-glutamate and meso-diaminopimelate. Binds and degrades high-molecular weight peptidoglycan from a number of Actinobacteria; activity is increased in the presence of RpfB and inhibited by PBP1A (ponA1). Required for normal separation of daughter cells after cell division and for cell wall integrity. Required for host cell invasion and intracellular survival in host macrophages. The chain is Peptidoglycan endopeptidase RipA (ripA) from Mycobacterium tuberculosis (strain ATCC 25618 / H37Rv).